The chain runs to 478 residues: Sugar transporter ERD6-like 18 (478 aa).

The next 12 membrane-spanning stretches (helical) occupy residues 31–51 (ITAC…SFGV), 71–91 (IAQF…GALF), 110–130 (LLCI…WLNF), 133–153 (ISSG…IAEI), 162–180 (FTFT…VYFS), 188–208 (ILAL…FFVP), 270–290 (TLVV…SAVL), 306–326 (IGST…VILV), 333–353 (PLLL…GVAF), 367–387 (VFTF…LGGL), 407–427 (IVTL…NFLL), and 433–453 (GTFY…WLLV).

Belongs to the major facilitator superfamily. Sugar transporter (TC 2.A.1.1) family. Expressed in leaf vasculature, stem and flowers.

The protein localises to the membrane. Functionally, sugar transporter. The polypeptide is Sugar transporter ERD6-like 18 (SFP2) (Arabidopsis thaliana (Mouse-ear cress)).